Reading from the N-terminus, the 297-residue chain is HTH-type transcriptional regulator ArgP (297 aa).

Residues Pro4–Thr60 form the HTH lysR-type domain. Residues Phe21–Lys40 constitute a DNA-binding region (H-T-H motif).

The protein belongs to the LysR transcriptional regulatory family. As to quaternary structure, homodimer.

Its function is as follows. Controls the transcription of genes involved in arginine and lysine metabolism. This Escherichia fergusonii (strain ATCC 35469 / DSM 13698 / CCUG 18766 / IAM 14443 / JCM 21226 / LMG 7866 / NBRC 102419 / NCTC 12128 / CDC 0568-73) protein is HTH-type transcriptional regulator ArgP.